A 215-amino-acid chain; its full sequence is Probable ribosome-binding factor A, chloroplastic (215 aa).

Residues 1–52 constitute a chloroplast transit peptide; that stretch reads MPNLLHTNQSHFFFLHHPPIYTVSSKTQAFHFPQSMAPVNLRTNLSVRRTVR. The span at 183–192 shows a compositional bias: basic and acidic residues; sequence KGSGEGKTEP. Positions 183 to 210 are disordered; that stretch reads KGSGEGKTEPSDSTEDDQDWEVDDPDED. Positions 194–210 are enriched in acidic residues; it reads DSTEDDQDWEVDDPDED.

The protein belongs to the RbfA family.

It localises to the plastid. It is found in the chloroplast. In Arabidopsis thaliana (Mouse-ear cress), this protein is Probable ribosome-binding factor A, chloroplastic.